A 167-amino-acid chain; its full sequence is UPF0179 protein Pars_2336 (167 aa).

This sequence belongs to the UPF0179 family.

This is UPF0179 protein Pars_2336 from Pyrobaculum arsenaticum (strain DSM 13514 / JCM 11321 / PZ6).